We begin with the raw amino-acid sequence, 161 residues long: Phosphopantetheine adenylyltransferase (161 aa).

Thr9 lines the substrate pocket. ATP is bound by residues 9 to 10 (TF) and His17. Residues Lys41, Leu73, and Arg87 each contribute to the substrate site. Residues 88 to 90 (GLR), Glu98, and 123 to 129 (YQFISGT) contribute to the ATP site.

The protein belongs to the bacterial CoaD family. As to quaternary structure, homohexamer. Requires Mg(2+) as cofactor.

It localises to the cytoplasm. The catalysed reaction is (R)-4'-phosphopantetheine + ATP + H(+) = 3'-dephospho-CoA + diphosphate. It participates in cofactor biosynthesis; coenzyme A biosynthesis; CoA from (R)-pantothenate: step 4/5. In terms of biological role, reversibly transfers an adenylyl group from ATP to 4'-phosphopantetheine, yielding dephospho-CoA (dPCoA) and pyrophosphate. This chain is Phosphopantetheine adenylyltransferase, found in Cupriavidus pinatubonensis (strain JMP 134 / LMG 1197) (Cupriavidus necator (strain JMP 134)).